The primary structure comprises 466 residues: Delta-1 crystallin (466 aa).

The residue at position 2 (Ala-2) is a Blocked amino end (Ala).

The protein belongs to the lyase 1 family. Argininosuccinate lyase subfamily. Homotetramer. In terms of processing, the N-terminus is blocked. Eye lens.

Functionally, delta crystallin, the principal crystallin in embryonic lens, is found only in birds and reptiles. The polypeptide is Delta-1 crystallin (ASL1) (Gallus gallus (Chicken)).